The primary structure comprises 3948 residues: Hybrid PKS-NRPS synthetase fsa1 (3948 aa).

In terms of domain architecture, Ketosynthase family 3 (KS3) spans 4 to 438 (SEPIAVIGSA…GTNAHAIIEA (435 aa)). Active-site for beta-ketoacyl synthase activity residues include Cys177, His316, and His358. Residues 543–846 (IFTGQGTQWP…LDTIEAISEG (304 aa)) form a malonyl-CoA:ACP transacylase (MAT) domain region. The interval 931-1066 (HPLLGRRCHD…AQIKASLGTP (136 aa)) is N-terminal hotdog fold. Residues 931 to 1233 (HPLLGRRCHD…MELVPFSPAT (303 aa)) form a dehydratase (DH) domain region. The PKS/mFAS DH domain occupies 931-1235 (HPLLGRRCHD…LVPFSPATPA (305 aa)). Catalysis depends on His964, which acts as the Proton acceptor; for dehydratase activity. The tract at residues 1081 to 1235 (LRPVSVDRFY…LVPFSPATPA (155 aa)) is C-terminal hotdog fold. The active-site Proton donor; for dehydratase activity is Asp1141. Positions 1381–1578 (YEQGFGLNLV…TTPPVHKILP (198 aa)) are methyltransferase (MT) domain. Positions 2105-2277 (TFLLIGLTGE…VAASSIDISS (173 aa)) are ketoreductase (KR) domain. One can recognise a Carrier 1 domain in the interval 2389-2464 (AIIKESFIVR…DLVDESLDLL (76 aa)). Ser2424 carries the O-(pantetheine 4'-phosphoryl)serine modification. The tract at residues 2475–2555 (EAGNAHPAKP…TDNLTPPRTF (81 aa)) is disordered. Polar residues-rich tracts occupy residues 2487–2505 (VIPQTPTRVTPPESSQGTS) and 2513–2528 (GSDSSRSPIDTPLTSW). Residues 2529-2541 (DRQDLSPPDKSDD) are compositionally biased toward basic and acidic residues. Residues 2542–2551 (APNSTDNLTP) are compositionally biased toward polar residues. A condensation (C) domain region spans residues 2547–2976 (DNLTPPRTFP…TQVLLRSYLS (430 aa)). The tract at residues 3000-3402 (LKVAVDAGKA…PDTFFGTSGT (403 aa)) is adenylation (A) (KR) domain. Positions 3540 to 3617 (KSLTASEKRL…AMASVLEDCG (78 aa)) constitute a Carrier 2 domain. O-(pantetheine 4'-phosphoryl)serine is present on Ser3577. The reductase (RED) domain stretch occupies residues 3653 to 3870 (LTGSSGYLGR…MPVNEIVEAI (218 aa)).

It in the C-terminal section; belongs to the NRP synthetase family.

It catalyses the reaction L-serine + 7 malonyl-CoA + acetyl-CoA + 2 S-adenosyl-L-methionine + ATP + 8 NADPH + 11 H(+) = (5S)-3-[(2E,6R,8E,10E,12E)-2,6-dimethyltetradeca-2,8,10,12-tetraenoyl]-5-(hydroxymethyl)pyrrolidine-2,4-dione + AMP + 2 S-adenosyl-L-homocysteine + 7 CO2 + diphosphate + 8 NADP(+) + 8 CoA + 6 H2O. It functions in the pathway mycotoxin biosynthesis. Hybrid PKS-NRPS synthetase; part of the gene cluster that mediates the biosynthesis of HIV-1 integrase inhibitor equisetin and of fusarisetin A, both trans-fused decalin-containing tetramic acids showing also antimicrobial activity. The PKS module of fsa1 together with the enoylreductase fsa3 catalyze the formation of the polyketide unit which is then conjugated to L-serine by the condensation domain of the fsa1 NRPS module. Activity of the Dieckmann cyclase domain (RED) results in release of the Dieckmann product intermediate. Diels-Alderase fsa2 is involved in endo-selective Diels-Alder cycloaddition to form the decalin ring, leading to the production of N-desmethylequisetin also called trichosetin. Subsequent N-methylation is carried out by fsa4 to give equisetin. The enzymatic gene responsible for the conversion of equisetin to fusarisetin A has not been identified yet and is probably located outside of the fsa cluster. The polypeptide is Hybrid PKS-NRPS synthetase fsa1 (Fusarium sp. (strain FN080326)).